We begin with the raw amino-acid sequence, 206 residues long: MSERSVSKQKQEKRWYTVMAPEIFDRAELGETPADEPEQVYDRTVQTTLGELQNDPSENNTKLTFQISDVGSDTAYTDFVQHELTRDYLRSLTRRGTSKVDAFVTVLTTDDYRVQVQPVAYTTKSADRSQEQAIRSTMVDLVEESAADNTFADLIDSIVEGRLSSAIYNEAKTIYPLRRVEIQKTRLQASPEEVAAEEEASVDVDD.

It belongs to the eukaryotic ribosomal protein eS1 family.

This chain is Small ribosomal subunit protein eS1, found in Natronomonas pharaonis (strain ATCC 35678 / DSM 2160 / CIP 103997 / JCM 8858 / NBRC 14720 / NCIMB 2260 / Gabara) (Halobacterium pharaonis).